A 323-amino-acid chain; its full sequence is Aspartate carbamoyltransferase catalytic subunit (323 aa).

Residues arginine 65 and threonine 66 each contribute to the carbamoyl phosphate site. L-aspartate is bound at residue lysine 93. Carbamoyl phosphate contacts are provided by arginine 115, histidine 149, and glutamine 152. L-aspartate is bound by residues arginine 182 and arginine 237. The carbamoyl phosphate site is built by glycine 278 and proline 279.

It belongs to the aspartate/ornithine carbamoyltransferase superfamily. ATCase family. As to quaternary structure, heterododecamer (2C3:3R2) of six catalytic PyrB chains organized as two trimers (C3), and six regulatory PyrI chains organized as three dimers (R2).

The catalysed reaction is carbamoyl phosphate + L-aspartate = N-carbamoyl-L-aspartate + phosphate + H(+). The protein operates within pyrimidine metabolism; UMP biosynthesis via de novo pathway; (S)-dihydroorotate from bicarbonate: step 2/3. In terms of biological role, catalyzes the condensation of carbamoyl phosphate and aspartate to form carbamoyl aspartate and inorganic phosphate, the committed step in the de novo pyrimidine nucleotide biosynthesis pathway. In Aromatoleum aromaticum (strain DSM 19018 / LMG 30748 / EbN1) (Azoarcus sp. (strain EbN1)), this protein is Aspartate carbamoyltransferase catalytic subunit.